The primary structure comprises 214 residues: UPF0690 protein C1orf52 homolog (214 aa).

Disordered stretches follow at residues 1-66 (MSDE…SVSK) and 81-214 (DSRA…QCLD). Positions 32–44 (PEATASSAPAEPQ) are enriched in low complexity. Basic and acidic residues-rich tracts occupy residues 49–61 (RAAE…DELF) and 81–97 (DSRA…EFKV). Acidic residues predominate over residues 152-165 (EEEEEEQQPDSDDD). Position 162 is a phosphoserine (serine 162). Composition is skewed to basic and acidic residues over residues 179–192 (VETF…KRDI) and 200–214 (NFVE…QCLD).

This sequence belongs to the UPF0690 family.

This Danio rerio (Zebrafish) protein is UPF0690 protein C1orf52 homolog.